The sequence spans 399 residues: Transmembrane protein 237 homolog (399 aa).

The segment covering 1-11 (MPPTSRPVPPP) has biased composition (pro residues). A disordered region spans residues 1 to 158 (MPPTSRPVPP…PHDKRNMPAK (158 aa)). Composition is skewed to basic and acidic residues over residues 36-45 (NQQRRFRENN), 111-135 (EAAK…DPRR), and 144-158 (KSFR…MPAK). 4 consecutive transmembrane segments (helical) span residues 222 to 242 (IANI…IFSF), 256 to 276 (MSLP…VSAI), 301 to 321 (GLIT…CIQL), and 343 to 363 (VFNV…AFKP).

It belongs to the TMEM237 family.

It localises to the membrane. It is found in the cell projection. The protein resides in the cilium. Component of the transition zone in primary cilia. Required for ciliogenesis. The polypeptide is Transmembrane protein 237 homolog (Caenorhabditis elegans).